Consider the following 463-residue polypeptide: Glutamate--tRNA ligase 2 (463 aa).

A 'HIGH' region motif is present at residues 10–20; it reads PSPTGYLHIGG. Positions 238–242 match the 'KMSKS' region motif; the sequence is KLSKR. Lys241 provides a ligand contact to ATP.

It belongs to the class-I aminoacyl-tRNA synthetase family. Glutamate--tRNA ligase type 1 subfamily. In terms of assembly, monomer.

Its subcellular location is the cytoplasm. It catalyses the reaction tRNA(Glu) + L-glutamate + ATP = L-glutamyl-tRNA(Glu) + AMP + diphosphate. Its function is as follows. Catalyzes the attachment of glutamate to tRNA(Glu) in a two-step reaction: glutamate is first activated by ATP to form Glu-AMP and then transferred to the acceptor end of tRNA(Glu). In Helicobacter acinonychis (strain Sheeba), this protein is Glutamate--tRNA ligase 2.